Here is a 115-residue protein sequence, read N- to C-terminus: Ribonuclease P protein component (115 aa).

Belongs to the RnpA family. Consists of a catalytic RNA component (M1 or rnpB) and a protein subunit.

It carries out the reaction Endonucleolytic cleavage of RNA, removing 5'-extranucleotides from tRNA precursor.. In terms of biological role, RNaseP catalyzes the removal of the 5'-leader sequence from pre-tRNA to produce the mature 5'-terminus. It can also cleave other RNA substrates such as 4.5S RNA. The protein component plays an auxiliary but essential role in vivo by binding to the 5'-leader sequence and broadening the substrate specificity of the ribozyme. The chain is Ribonuclease P protein component from Staphylococcus epidermidis (strain ATCC 35984 / DSM 28319 / BCRC 17069 / CCUG 31568 / BM 3577 / RP62A).